Reading from the N-terminus, the 338-residue chain is Protein WVD2-like 2 (338 aa).

Over residues 1–14 (MGRELVDKHMDKKA) the composition is skewed to basic and acidic residues. The interval 1 to 150 (MGRELVDKHM…SFSVASSSAT (150 aa)) is disordered. Composition is skewed to polar residues over residues 15–37 (NSLTASSTGSSDDNKVPSPSTNE) and 59–69 (QGITETPGSHK). Residues 100–115 (NNSLGNGASHNSSSAS) show a composition bias toward low complexity. Residues 128-138 (RIPDHKMHHDE) are compositionally biased toward basic and acidic residues. Positions 177-214 (REFYQKLEEKQKALEAEKRENEKRLKEEQEAVTKQLRK) form a coiled coil. The disordered stretch occupies residues 222–338 (PVPSFYQEGP…GENGVGVVEE (117 aa)). Polar residues predominate over residues 288-300 (TNSVPRTPNSSSK).

Belongs to the TPX2 family. Expressed in seedlings.

It localises to the cytoplasm. The protein localises to the cytoskeleton. In terms of biological role, microtubule-associated protein (MAP) that regulates the orientation of interphase cortical microtubules. The polypeptide is Protein WVD2-like 2 (Arabidopsis thaliana (Mouse-ear cress)).